The sequence spans 159 residues: Phosphopantetheine adenylyltransferase (159 aa).

The protein belongs to the eukaryotic CoaD family.

The protein resides in the cytoplasm. The enzyme catalyses (R)-4'-phosphopantetheine + ATP + H(+) = 3'-dephospho-CoA + diphosphate. It participates in cofactor biosynthesis; coenzyme A biosynthesis. Reversibly transfers an adenylyl group from ATP to 4'-phosphopantetheine, yielding dephospho-CoA (dPCoA) and pyrophosphate. The sequence is that of Phosphopantetheine adenylyltransferase from Thermococcus gammatolerans (strain DSM 15229 / JCM 11827 / EJ3).